The chain runs to 158 residues: Globin CTT-I/CTT-IA (158 aa).

Positions 1 to 15 (MKFLILALCVAAAMA) are cleaved as a signal peptide. The region spanning 16–158 (GPSGDQIAAA…FVFSTLKNEL (143 aa)) is the Globin domain. Positions 74 and 109 each coordinate heme b.

It belongs to the globin family. As to quaternary structure, monomer.

The chain is Globin CTT-I/CTT-IA (CTT-1) from Chironomus thummi thummi (Midge).